A 1151-amino-acid chain; its full sequence is ATP-dependent helicase/deoxyribonuclease subunit B (1151 aa).

A UvrD-like helicase ATP-binding domain is found at 1–273; sequence MALRLVLGRA…LALAAGVRVE (273 aa). ATP is bound at residue 8 to 15; that stretch reads GRAGSGKT. Residues 282–578 enclose the UvrD-like helicase C-terminal domain; it reads PPRFREAPAL…KLRLIPPALD (297 aa). Residues Cys-788, Cys-1107, Cys-1110, and Cys-1116 each contribute to the [4Fe-4S] cluster site.

The protein belongs to the helicase family. AddB/RexB type 1 subfamily. As to quaternary structure, heterodimer of AddA and AddB. Requires Mg(2+) as cofactor. [4Fe-4S] cluster is required as a cofactor.

The heterodimer acts as both an ATP-dependent DNA helicase and an ATP-dependent, dual-direction single-stranded exonuclease. Recognizes the chi site generating a DNA molecule suitable for the initiation of homologous recombination. The AddB subunit has 5' -&gt; 3' nuclease activity but not helicase activity. This chain is ATP-dependent helicase/deoxyribonuclease subunit B, found in Moorella thermoacetica (strain ATCC 39073 / JCM 9320).